The primary structure comprises 178 residues: Large ribosomal subunit protein uL6 (178 aa).

Belongs to the universal ribosomal protein uL6 family. As to quaternary structure, part of the 50S ribosomal subunit.

Functionally, this protein binds to the 23S rRNA, and is important in its secondary structure. It is located near the subunit interface in the base of the L7/L12 stalk, and near the tRNA binding site of the peptidyltransferase center. This chain is Large ribosomal subunit protein uL6, found in Streptococcus pneumoniae (strain ATCC 700669 / Spain 23F-1).